Consider the following 796-residue polypeptide: Protein translocase subunit SecA 2 (796 aa).

Residues Gln84, 102 to 106 (GEGKT), and Asp496 each bind ATP.

The protein belongs to the SecA family. As to quaternary structure, monomer and homodimer. Part of the essential Sec protein translocation apparatus which comprises SecA, SecYEG and auxiliary proteins SecDF. Other proteins may also be involved.

The protein resides in the cell membrane. It localises to the cytoplasm. The catalysed reaction is ATP + H2O + cellular proteinSide 1 = ADP + phosphate + cellular proteinSide 2.. In terms of biological role, part of the Sec protein translocase complex. Interacts with the SecYEG preprotein conducting channel. Has a central role in coupling the hydrolysis of ATP to the transfer of proteins into and across the cell membrane, serving as an ATP-driven molecular motor driving the stepwise translocation of polypeptide chains across the membrane. The protein is Protein translocase subunit SecA 2 of Staphylococcus haemolyticus (strain JCSC1435).